We begin with the raw amino-acid sequence, 224 residues long: Small ribosomal subunit protein uS7 (224 aa).

This sequence belongs to the universal ribosomal protein uS7 family. Part of the 30S ribosomal subunit.

Its function is as follows. One of the primary rRNA binding proteins, it binds directly to 16S rRNA where it nucleates assembly of the head domain of the 30S subunit. Is located at the subunit interface close to the decoding center. This is Small ribosomal subunit protein uS7 from Caldivirga maquilingensis (strain ATCC 700844 / DSM 13496 / JCM 10307 / IC-167).